A 144-amino-acid polypeptide reads, in one-letter code: Large ribosomal subunit protein uL16 (144 aa).

It belongs to the universal ribosomal protein uL16 family. In terms of assembly, part of the 50S ribosomal subunit.

Binds 23S rRNA and is also seen to make contacts with the A and possibly P site tRNAs. This chain is Large ribosomal subunit protein uL16, found in Natranaerobius thermophilus (strain ATCC BAA-1301 / DSM 18059 / JW/NM-WN-LF).